A 492-amino-acid chain; its full sequence is MDPYRVRPSSAHDSPFFTTNSGAPVWNNNSSLTVGTRGPILLEDYHLLEKLANFDRERIPERVVHARGASAKGFFEVTHDITQLTSADFLRGPGVQTPVIVRFSTVIHERGSPETLRDPRGFAVKFYTREGNFDLVGNNFPVFFVRDGMKFPDMVHALKPNPKSHIQENWRILDFFSHHPESLHMFSFLFDDLGIPQDYRHMEGAGVNTYMLINKAGKAHYVKFHWKPTCGIKCLSDEEAIRVGGANHSHATKDLYDSIAAGNYPQWNLFVQVMDPAHEDKFDFDPLDVTKIWPEDILPLQPVGRLVLNKNIDNFFNENEQIAFCPALVVPGIHYSDDKLLQTRIFSYADSQRHRLGPNYLQLPVNAPKCAHHNNHHDGFMNFMHRDEEVNYFPSRLDPVRHAEKYPTTPIVCSGNREKCFIGKENNFKQPGERYRSWDSDRQERFVKRFVEALSEPRVTHEIRSIWISYWSQADKSLGQKLATRLNVRPNF.

Catalysis depends on residues His65 and Asn138. Tyr348 contributes to the heme binding site.

The protein belongs to the catalase family. Homotetramer and heterotetramer. At least six or seven isozymes are produced from a mixture of 3 gene products. Interacts with NCA1. Interacts with LSD1. It depends on heme as a cofactor.

Its subcellular location is the cytoplasm. The catalysed reaction is 2 H2O2 = O2 + 2 H2O. Occurs in almost all aerobically respiring organisms and serves to protect cells from the toxic effects of hydrogen peroxide. In Arabidopsis thaliana (Mouse-ear cress), this protein is Catalase-1 (CAT1).